Here is a 743-residue protein sequence, read N- to C-terminus: Type VI secretion system spike protein VgrG1 (743 aa).

The protein belongs to the VgrG protein family.

It is found in the secreted. The catalysed reaction is L-arginyl-[protein] + NAD(+) = N(omega)-(ADP-D-ribosyl)-L-arginyl-[protein] + nicotinamide + H(+). Functionally, part of the type VI secretion system specialized secretion system, which delivers several virulence factors in both prokaryotic and eukaryotic cells during infection. Acts directly as an secreted effector with an actin ADP-ribosyltransferase activity that disrupts the host actin cytoskeleton, leading to a decrease in host cell viability and an increase in apoptosis. The protein is Type VI secretion system spike protein VgrG1 (vgrG1) of Aeromonas hydrophila subsp. hydrophila (strain ATCC 7966 / DSM 30187 / BCRC 13018 / CCUG 14551 / JCM 1027 / KCTC 2358 / NCIMB 9240 / NCTC 8049).